Here is a 102-residue protein sequence, read N- to C-terminus: Small ribosomal subunit protein uS10 (102 aa).

This sequence belongs to the universal ribosomal protein uS10 family. In terms of assembly, part of the 30S ribosomal subunit.

Functionally, involved in the binding of tRNA to the ribosomes. In Phenylobacterium zucineum (strain HLK1), this protein is Small ribosomal subunit protein uS10.